Reading from the N-terminus, the 950-residue chain is Double-stranded RNA-binding protein Staufen homolog (950 aa).

Disordered stretches follow at residues 25 to 168, 202 to 274, and 288 to 342; these read VSGA…QQQQ, QQQL…QPST, and VTPV…NTKE. A compositionally biased stretch (low complexity) spans 31-43; that stretch reads QQRSMMSQQRGGS. The span at 45-66 shows a compositional bias: polar residues; that stretch reads AINSSKSPYQLQTSSISQFSHL. Positions 67-77 are enriched in low complexity; the sequence is QQQQQQQQQQQ. Residues 78-122 are compositionally biased toward polar residues; it reads LVNNYHKQKQMSPDITSHQFSSSTGGGMPTQNGNYQSMSGSSIHT. 3 stretches are compositionally biased toward low complexity: residues 130–143, 153–168, and 202–253; these read QLSL…YSSQ, QQHH…QQQQ, and QQQL…ILQH. A compositionally biased stretch (polar residues) spans 254 to 274; the sequence is SPTSGKSLSSAPHGTSVQPST. Residues 313–322 show a composition bias toward basic and acidic residues; the sequence is SGRDSVHVSD. DRBM domains are found at residues 344–411, 435–546, 578–645, and 690–758; these read TPMC…ETKC, TPTV…ILKN, SEIS…ELRK, and NPIS…LLGY. 2 disordered regions span residues 758–833 and 922–950; these read YTKP…HTAS and DIHP…DFSK. Residues 765–782 show a composition bias toward polar residues; that stretch reads PTKSSFKNPSTGEAGQTN. The span at 922 to 937 shows a compositional bias: basic and acidic residues; the sequence is DIHPGGDGPQVKKDVL.

In terms of tissue distribution, strongly expressed in nervous tissue (at protein level).

The protein resides in the perikaryon. Its subcellular location is the cell projection. In terms of biological role, RNA-binding protein which is required for syntaxin location in sensory neurons during long-term synaptic facilitation. Binds to syntaxin mRNA and is required to maintain its accumulation at the axon hillock following neuronal stimulation and at the opposite pole in stable unstimulated sensory neurons. The polypeptide is Double-stranded RNA-binding protein Staufen homolog (Aplysia californica (California sea hare)).